The chain runs to 193 residues: Probable GTP-binding protein EngB (193 aa).

The 172-residue stretch at 22 to 193 folds into the EngB-type G domain; the sequence is LLPEVALAGR…AAWEAIYRHL (172 aa). GTP-binding positions include 30-37, 57-61, 75-78, 142-145, and 174-176; these read GRSNVGKS, GKTQT, DVPG, TKLD, and FSS. The Mg(2+) site is built by Ser37 and Thr59.

Belongs to the TRAFAC class TrmE-Era-EngA-EngB-Septin-like GTPase superfamily. EngB GTPase family. Mg(2+) is required as a cofactor.

Its function is as follows. Necessary for normal cell division and for the maintenance of normal septation. The chain is Probable GTP-binding protein EngB from Exiguobacterium sibiricum (strain DSM 17290 / CCUG 55495 / CIP 109462 / JCM 13490 / 255-15).